The following is a 195-amino-acid chain: BH3-interacting domain death agonist (195 aa).

M1 bears the N-acetylmethionine mark. The segment covering 58 to 69 has biased composition (polar residues); it reads TDGSQASRSFNQ. The segment at 58–77 is disordered; that stretch reads TDGSQASRSFNQGRIEPDSE. S78 carries the post-translational modification Phosphoserine. The BH3 signature appears at 87 to 100; that stretch reads ARHLAQIGDEMDHN.

As to quaternary structure, forms heterodimers either with the pro-apoptotic protein BAX or the anti-apoptotic protein BCL2. Interacts with PLEKHN1. Interacts with ITCH. Interacts with MTCH2. In terms of processing, TNF-alpha induces caspase-mediated cleavage into a major p15 and minor p13 and p11 products. Cleaved by CASP6 into a major p15 and minor p13 products, leading to release of cytochrome c and subsequent nonalcoholic steatohepatitis. Post-translationally, ubiquitinated by ITCH; ubiquitination results in proteasome-dependent degradation.

It localises to the cytoplasm. Its subcellular location is the mitochondrion membrane. The protein resides in the mitochondrion outer membrane. Functionally, induces caspases and apoptosis. Counters the protective effect of BCL2. Induces caspase activation and apoptosis. Allows the release of cytochrome c. This chain is BH3-interacting domain death agonist (Bid), found in Mus musculus (Mouse).